The following is a 217-amino-acid chain: Large ribosomal subunit protein uL1 (217 aa).

The protein belongs to the universal ribosomal protein uL1 family. Component of the large ribosomal subunit (LSU). Mature ribosomes consist of a small (40S) and a large (60S) subunit. The 40S subunit contains about 32 different proteins and 1 molecule of RNA (18S). The 60S subunit contains 45 different proteins and 3 molecules of RNA (25S, 5.8S and 5S). uL1 forms part of the L1 stalk.

The protein localises to the cytoplasm. In terms of biological role, component of the ribosome, a large ribonucleoprotein complex responsible for the synthesis of proteins in the cell. The small ribosomal subunit (SSU) binds messenger RNAs (mRNAs) and translates the encoded message by selecting cognate aminoacyl-transfer RNA (tRNA) molecules. The large subunit (LSU) contains the ribosomal catalytic site termed the peptidyl transferase center (PTC), which catalyzes the formation of peptide bonds, thereby polymerizing the amino acids delivered by tRNAs into a polypeptide chain. The nascent polypeptides leave the ribosome through a tunnel in the LSU and interact with protein factors that function in enzymatic processing, targeting, and the membrane insertion of nascent chains at the exit of the ribosomal tunnel. uL1 forms part of the L1 stalk, a mobile element that plays a role in evacuating the exit-site tRNA. The polypeptide is Large ribosomal subunit protein uL1 (RPL10A) (Candida albicans (strain SC5314 / ATCC MYA-2876) (Yeast)).